We begin with the raw amino-acid sequence, 360 residues long: Photosystem II protein D1 1 (360 aa).

At 2-31 (TTTLQRRESANLWERFCNWVTSTDNRLYVG) the chain is on the cytoplasmic side. The chain crosses the membrane as a helical span at residues 32-53 (WFGVIMIPTLLAATICFVIAFI). Residues 54–110 (AAPPVDIDGIREPVSGSLLYGNNIITGAVVPSSNAIGLHFYPIWEAASLDEWLYNGG) are Lumenal-facing. A helical membrane pass occupies residues 111-132 (PYQLIIFHFLLGASCYMGRQWE). His118 contributes to the chlorophyll a binding site. 2 residues coordinate pheophytin a: Tyr126 and Gln130. The Cytoplasmic segment spans residues 133 to 142 (LSYRLGMRPW). A helical membrane pass occupies residues 143–163 (ICVAYSAPLASAFAVFLIYPI). Residue Tyr147 coordinates pheophytin a. The Lumenal segment spans residues 164-191 (GQGSFSDGMPLGISGTFNFMIVFQAEHN). [CaMn4O5] cluster-binding residues include Asp170 and Glu189. Residues 192-217 (ILMHPFHQLGVAGVFGGALFCAMHGS) form a helical membrane-spanning segment. Position 198 (His198) interacts with chlorophyll a. A quinone contacts are provided by residues His215 and 264–265 (SF). Residue His215 participates in Fe cation binding. Residues 218 to 272 (LVTSSLIRETTETESANYGYKFGQEEETYNIVAAHGYFGRLIFQYASFNNSRSLH) lie on the Cytoplasmic side of the membrane. Fe cation is bound at residue His272. The chain crosses the membrane as a helical span at residues 273-295 (FFLAAWPVVGVWFTALGISTMAF). The Lumenal portion of the chain corresponds to 296–344 (NLNGFNFNHSVIDAKGNVINTWADIINRANLGMEVMHERNAHNFPLDLA). [CaMn4O5] cluster contacts are provided by His332, Glu333, Asp342, and Ala344. Residues 345-360 (SAESAPVAMIAPSING) constitute a propeptide that is removed on maturation.

The protein belongs to the reaction center PufL/M/PsbA/D family. PSII is composed of 1 copy each of membrane proteins PsbA, PsbB, PsbC, PsbD, PsbE, PsbF, PsbH, PsbI, PsbJ, PsbK, PsbL, PsbM, PsbT, PsbX, PsbY, PsbZ, Psb30/Ycf12, peripheral proteins PsbO, CyanoQ (PsbQ), PsbU, PsbV and a large number of cofactors. It forms dimeric complexes. Precursor protein interacts with Ycf48. Part of a photosystem II (PSII) assembly intermediate complex PSII-I; crystallized from a strain deleted of psbJ, it forms monomeric PSII before addition of the oxygen evolving complex. PSII-I includes 3 assembly factors not found in mature PSII (Psb27, Psb28 and Psb34). In PSII-I the C-terminus of D1 (this subunit) is already processed but not yet found at its final position. Requires The D1/D2 heterodimer binds P680, chlorophylls that are the primary electron donor of PSII, and subsequent electron acceptors. It shares a non-heme iron and each subunit binds pheophytin, quinone, additional chlorophylls, carotenoids and lipids. D1 provides most of the ligands for the Mn4-Ca-O5 cluster of the oxygen-evolving complex (OEC). There is also a Cl(-1) ion associated with D1 and D2, which is required for oxygen evolution. PSII binds additional chlorophylls, carotenoids and specific lipids. as cofactor. In terms of processing, C-terminally processed by CtpA; processing is essential to allow assembly of the oxygen-evolving complex and thus photosynthetic growth. Post-translationally, tyr-161 forms a radical intermediate that is referred to as redox-active TyrZ, YZ or Y-Z.

It is found in the cellular thylakoid membrane. It catalyses the reaction 2 a plastoquinone + 4 hnu + 2 H2O = 2 a plastoquinol + O2. Its function is as follows. Photosystem II (PSII) is a light-driven water:plastoquinone oxidoreductase that uses light energy to abstract electrons from H(2)O, generating O(2) and a proton gradient subsequently used for ATP formation. It consists of a core antenna complex that captures photons, and an electron transfer chain that converts photonic excitation into a charge separation. The D1/D2 (PsbA/PsbD) reaction center heterodimer binds P680, the primary electron donor of PSII as well as several subsequent electron acceptors. The chain is Photosystem II protein D1 1 from Thermosynechococcus vestitus (strain NIES-2133 / IAM M-273 / BP-1).